A 481-amino-acid chain; its full sequence is Cysteine--tRNA ligase (481 aa).

Residue Cys-27 participates in Zn(2+) binding. A 'HIGH' region motif is present at residues 29 to 39 (PTVYNYAHIGN). Residues Cys-222, His-247, and Glu-251 each contribute to the Zn(2+) site. Residues 279–283 (KMSKS) carry the 'KMSKS' region motif. An ATP-binding site is contributed by Lys-282.

The protein belongs to the class-I aminoacyl-tRNA synthetase family. Monomer. The cofactor is Zn(2+).

The protein localises to the cytoplasm. The enzyme catalyses tRNA(Cys) + L-cysteine + ATP = L-cysteinyl-tRNA(Cys) + AMP + diphosphate. The polypeptide is Cysteine--tRNA ligase (Borrelia turicatae (strain 91E135)).